Reading from the N-terminus, the 405-residue chain is Cytochrome b (405 aa).

Residues 44-64 (FGSLAGIAMIIMIATGIFLAM) traverse the membrane as a helical segment. Residues H94 and H108 each coordinate heme b. 8 consecutive transmembrane segments (helical) span residues 97–117 (GASM…YYGS), 124–144 (VLWW…FMGY), 163–183 (FSAI…GFSV), 191–211 (FFSL…LHMW), 245–265 (FGLG…PNFF), 303–323 (LGGV…PWLD), 338–358 (GFFW…AMPA), and 368–388 (LATI…GWFE). Heme b is bound by residues H195 and H209.

The protein belongs to the cytochrome b family. In terms of assembly, the main subunits of complex b-c1 are: cytochrome b, cytochrome c1 and the Rieske protein. Heme b serves as cofactor.

It is found in the cell membrane. Component of the ubiquinol-cytochrome c reductase complex (complex III or cytochrome b-c1 complex), which is a respiratory chain that generates an electrochemical potential coupled to ATP synthesis. This chain is Cytochrome b (petB), found in Rhodospirillum rubrum.